The sequence spans 628 residues: UvrABC system protein C (628 aa).

The GIY-YIG domain maps to 20–99; sequence TSAGVYLMRD…IKTHKPRYNV (80 aa). One can recognise a UVR domain in the interval 209–244; the sequence is AELLAQLEDQMQTAAAAMNFEHAARLRDRITGLNQL.

Belongs to the UvrC family. Interacts with UvrB in an incision complex.

The protein resides in the cytoplasm. The UvrABC repair system catalyzes the recognition and processing of DNA lesions. UvrC both incises the 5' and 3' sides of the lesion. The N-terminal half is responsible for the 3' incision and the C-terminal half is responsible for the 5' incision. This Gloeobacter violaceus (strain ATCC 29082 / PCC 7421) protein is UvrABC system protein C.